The primary structure comprises 61 residues: Probable tautomerase SERP0934 (61 aa).

Pro2 (proton acceptor; via imino nitrogen) is an active-site residue.

It belongs to the 4-oxalocrotonate tautomerase family.

The sequence is that of Probable tautomerase SERP0934 from Staphylococcus epidermidis (strain ATCC 35984 / DSM 28319 / BCRC 17069 / CCUG 31568 / BM 3577 / RP62A).